The sequence spans 227 residues: Ribose-5-phosphate isomerase A (227 aa).

Residues 28–31 (TGST), 85–88 (DGAD), and 98–101 (KGGG) each bind substrate. The active-site Proton acceptor is the glutamate 107. Lysine 125 contacts substrate.

The protein belongs to the ribose 5-phosphate isomerase family. As to quaternary structure, homodimer.

It catalyses the reaction aldehydo-D-ribose 5-phosphate = D-ribulose 5-phosphate. Its pathway is carbohydrate degradation; pentose phosphate pathway; D-ribose 5-phosphate from D-ribulose 5-phosphate (non-oxidative stage): step 1/1. Catalyzes the reversible conversion of ribose-5-phosphate to ribulose 5-phosphate. This Limosilactobacillus reuteri (strain DSM 20016) (Lactobacillus reuteri) protein is Ribose-5-phosphate isomerase A.